A 309-amino-acid chain; its full sequence is ATP-dependent Clp protease proteolytic subunit 3, chloroplastic (309 aa).

The transit peptide at 1-70 (MEMSLRLASS…WDVSSFSIDS (70 aa)) directs the protein to the chloroplast. Val71 bears the N-acetylvaline mark. Catalysis depends on Ser164, which acts as the Nucleophile. His189 is an active-site residue. At Thr194 the chain carries Phosphothreonine. A disordered region spans residues 290–309 (DNTNLPSERSMTQNGYAAIE). Over residues 292-309 (TNLPSERSMTQNGYAAIE) the composition is skewed to polar residues.

This sequence belongs to the peptidase S14 family. In terms of assembly, component of the chloroplastic Clp protease core complex which consist of at least 16 proteins: CLPP4 (3 copies), CLPP5 (3 copies), CLPR4 (2 copies), ClpP1 (1 copy), CLPP6 (1 copy), CLPR2 (1 copy), CLPT1 (1 copy), CLPT2 (1 copy) and 3 copies of CLPP3 and/or CLPR1 and/or CLPR3. The core complex is organized in two heptameric rings, one containing CLPP3,4,5,6 in a 1:2:3:1 ratio and the other CLPP1 and CLPR1,2,3,4 in a 3:1:1:1:1 ratio. Interacts with CHIP. In terms of processing, ubiquitinated in vitro by CHIP. In terms of tissue distribution, mostly expressed in leaves. Also detected in stems, and to a lower extent, in roots (at protein level).

It localises to the plastid. The protein localises to the chloroplast stroma. It catalyses the reaction Hydrolysis of proteins to small peptides in the presence of ATP and magnesium. alpha-casein is the usual test substrate. In the absence of ATP, only oligopeptides shorter than five residues are hydrolyzed (such as succinyl-Leu-Tyr-|-NHMec, and Leu-Tyr-Leu-|-Tyr-Trp, in which cleavage of the -Tyr-|-Leu- and -Tyr-|-Trp bonds also occurs).. Functionally, cleaves peptides in various proteins in a process that requires ATP hydrolysis. Has a chymotrypsin-like activity. Plays a major role in the degradation of misfolded proteins. In the absence of CLPP3, modified ClpPR core(s) could be formed, albeit at strongly reduced levels. The polypeptide is ATP-dependent Clp protease proteolytic subunit 3, chloroplastic (Arabidopsis thaliana (Mouse-ear cress)).